The sequence spans 954 residues: Valine--tRNA ligase (954 aa).

The short motif at 48–58 (PNVTGSLHMGH) is the 'HIGH' region element. Positions 560–564 (KMSKS) match the 'KMSKS' region motif. Lysine 563 provides a ligand contact to ATP. A coiled-coil region spans residues 883–953 (AGFINKEAEL…LKQQYLAIEA (71 aa)).

It belongs to the class-I aminoacyl-tRNA synthetase family. ValS type 1 subfamily. In terms of assembly, monomer.

Its subcellular location is the cytoplasm. The enzyme catalyses tRNA(Val) + L-valine + ATP = L-valyl-tRNA(Val) + AMP + diphosphate. In terms of biological role, catalyzes the attachment of valine to tRNA(Val). As ValRS can inadvertently accommodate and process structurally similar amino acids such as threonine, to avoid such errors, it has a 'posttransfer' editing activity that hydrolyzes mischarged Thr-tRNA(Val) in a tRNA-dependent manner. This chain is Valine--tRNA ligase, found in Pasteurella multocida (strain Pm70).